The chain runs to 199 residues: Prostatic spermine-binding protein (199 aa).

The first 18 residues, 1–18 (MLLLLTLAFLASPTCRAQ), serve as a signal peptide directing secretion. Residues 19–151 (NVLGNAAGKY…VRGIGFKWGN (133 aa)) form the Jacalin-type lectin domain. N-linked (GlcNAc...) asparagine glycosylation occurs at Asn-62. The interval 159–199 (HYNNKEDKADNKDADNKDADNKDDGDEDDDGNDDDDQKDES) is disordered. A compositionally biased stretch (basic and acidic residues) spans 160-180 (YNNKEDKADNKDADNKDADNK). Residues 181-199 (DDGDEDDDGNDDDDQKDES) show a composition bias toward acidic residues.

It to rat SBP. In terms of tissue distribution, prostate.

Its function is as follows. This protein seems to be functional equivalent to rat prostatic spermine-binding protein, which is involved in polyamine binding. This chain is Prostatic spermine-binding protein (Sbp), found in Mus musculus (Mouse).